We begin with the raw amino-acid sequence, 977 residues long: MWRTKAAAACVICRSLAHSNYGIKRKSPLQNLHLVSRSIHHPYHPSLKFQRRPLRISLQQFSSLNRLPLRKTKLLNVKYGYQSYRNFWLARLASRLLKIRYLILGSAVGGGYTAKKTYDQWEDMMPDLDEYKWIIPDFIWELDEHIDLEKLIKALPDADDLAKLLPDFEKIGESFTSLKGIFSPGYNLVSEVIGASDLLLLLGTPGETAFRATDQGYDSDKQYKKVSDKEKIDQLQEELLRTQLKYQRMLERLEKENKELRKLVLQRDDKGIHQRKLKKSLIDMYSEVLDILSDYDASYNTQDHLPRVVVVGDQSAGKTSVLEMIAQARIFPRGSGEMMTRSPVKVTLSEGPHHVALFKDSSREFDLTKEEDLAALRNEIEIRMRNSVKEGCTVSTETISLSVRGPGLQRMVLVDLPGVISTVTSGMAPDTKETIFSISKAYMQNPNAIILCIQDGSVDAERSIVTDLVSQMDPQGKRTIFVLTKVDLAEKNVASPSRIQQIIEGKLFPMKALGYFAVVTGKGNSSESIESIKEYEEEFFQNSKLLKTSMLKAHQVTTKNLSLAVSDCFWKMVRESVEQQADAFKATRFNLETEWKNNYPRLRELDRNELFEKAKNEILDEVISLTQVTPKHWEEILQKTLWERVSTHVIENIYLPAAQTMNSGTFNTTVDIKLKQWTDKQLPNKAVEVAWETLQEEFSRFMTEQKGKEHDDIFDKLKQAVKEESIKRHKWNERAEDSLRVIQHNALEDRSISDKQQWDAAIHFMEETLQSRLKDTESVIEDMVGPDWKKRWLYWISRTKEQNIRNETKNELEKLIKCNEEHAAYLANDEVTTVRKNLEARGITVDPCLIKDTWHQIYRRYFLKTALNHCNLCRRGFYYYQRHFVDSELECNDIVLFWRIQRMLAITANTLRQQLTNTEVRRLEKNVKEVLEDFAEDNEKKVKLLTGKRVQLAEDLKKVREIQEKLEAFIEALHQEK.

The transit peptide at 1–86 (MWRTKAAAAC…VKYGYQSYRN (86 aa)) directs the protein to the mitochondrion. Residues 87–95 (FWLARLASR) lie on the Mitochondrial matrix side of the membrane. The chain crosses the membrane as a helical span at residues 96–112 (LLKIRYLILGSAVGGGY). At 113-787 (TAKKTYDQWE…SVIEDMVGPD (675 aa)) the chain is on the mitochondrial intermembrane side. The stretch at 224–271 (KKVSDKEKIDQLQEELLRTQLKYQRMLERLEKENKELRKLVLQRDDKG) forms a coiled coil. The 277-residue stretch at 302–578 (QDHLPRVVVV…FWKMVRESVE (277 aa)) folds into the Dynamin-type G domain. The tract at residues 312–319 (GDQSAGKT) is G1 motif. GTP-binding residues include Ser-315, Gly-317, Lys-318, Thr-319, Ser-320, and Gly-334. Mg(2+) is bound at residue Thr-319. Residues 338 to 341 (MMTR) form a G2 motif region. Mg(2+)-binding residues include Thr-340 and Asp-415. The G3 motif stretch occupies residues 415-418 (DLPG). A G4 motif region spans residues 484–487 (TKVD). Residues Lys-485, Asp-487, and Thr-520 each coordinate GTP. Positions 518–521 (VVTG) are G5 motif. Stalk region regions lie at residues 606–853 (DRNE…IKDT) and 891–945 (CNDI…VKLL). A paddle region region spans residues 753–873 (SDKQQWDAAI…KTALNHCNLC (121 aa)). The stretch at 788-798 (WKKRWLYWISR) is an intramembrane region. Residues 799 to 977 (TKEQNIRNET…AFIEALHQEK (179 aa)) are Mitochondrial intermembrane-facing. Cys-873 and Cys-891 are disulfide-bonded. Residues 911 to 977 (LRQQLTNTEV…AFIEALHQEK (67 aa)) adopt a coiled-coil conformation.

Belongs to the TRAFAC class dynamin-like GTPase superfamily. Dynamin/Fzo/YdjA family. As to quaternary structure, oligomeric complex consisting of membrane-bound and soluble forms of OPA1. In terms of processing, cleaved by OMA1 or YME1L downstream of the transmembrane region in response to different signals to generate soluble forms. Cleaved by OMA1 at position S1 following stress conditions, generating the short soluble form (Dynamin-like GTPase OPA1, short form; S-OPA1).

The protein localises to the mitochondrion inner membrane. It is found in the mitochondrion intermembrane space. It catalyses the reaction GTP + H2O = GDP + phosphate + H(+). In terms of biological role, dynamin-related GTPase that is essential for normal mitochondrial morphology by mediating fusion of the mitochondrial inner membranes, regulating cristae morphology and maintaining respiratory chain function. Exists in two forms: the transmembrane, long form (Dynamin-like GTPase OPA1, long form; L-OPA1), which is tethered to the inner mitochondrial membrane, and the short soluble form (Dynamin-like GTPase OPA1, short form; S-OPA1), which results from proteolytic cleavage and localizes in the intermembrane space. Both forms (L-OPA1 and S-OPA1) cooperate to catalyze the fusion of the mitochondrial inner membrane. The equilibrium between L-OPA1 and S-OPA1 is essential: excess levels of S-OPA1, produced by cleavage by OMA1 following loss of mitochondrial membrane potential, lead to an impaired equilibrium between L-OPA1 and S-OPA1, inhibiting mitochondrial fusion. The balance between L-OPA1 and S-OPA1 also influences cristae shape and morphology. Its role in mitochondrial morphology is required for mitochondrial genome maintenance. Its function is as follows. Constitutes the transmembrane long form (L-OPA1) that plays a central role in mitochondrial inner membrane fusion and cristae morphology. L-OPA1 and the soluble short form (S-OPA1) form higher-order helical assemblies that coordinate the fusion of mitochondrial inner membranes. Inner membrane-anchored L-OPA1 molecules initiate membrane remodeling by recruiting soluble S-OPA1 to rapidly polymerize into a flexible cylindrical scaffold encaging the mitochondrial inner membrane. Once at the membrane surface, the formation of S-OPA1 helices induce bilayer curvature. OPA1 dimerization through the paddle region, which inserts into cardiolipin-containing membrane, promotes GTP hydrolysis and the helical assembly of a flexible OPA1 lattice on the membrane, which drives membrane curvature and mitochondrial fusion. Plays a role in the maintenance and remodeling of mitochondrial cristae, some invaginations of the mitochondrial inner membrane that provide an increase in the surface area. Probably acts by forming helical filaments at the inside of inner membrane tubes with the shape and dimensions of crista junctions. Functionally, constitutes the soluble short form (S-OPA1) generated by cleavage by OMA1, which plays a central role in mitochondrial inner membrane fusion and cristae morphology. The transmembrane long form (L-OPA1) and the S-OPA1 form higher-order helical assemblies that coordinate the fusion of mitochondrial inner membranes. Inner membrane-anchored L-OPA1 molecules initiate membrane remodeling by recruiting soluble S-OPA1 to rapidly polymerize into a flexible cylindrical scaffold encaging the mitochondrial inner membrane. Once at the membrane surface, the formation of S-OPA1 helices induce bilayer curvature. OPA1 dimerization through the paddle region, which inserts into cardiolipin-containing membrane, promotes GTP hydrolysis and the helical assembly of a flexible OPA1 lattice on the membrane, which drives membrane curvature and mitochondrial fusion. Excess levels of S-OPA1 produced by cleavage by OMA1 following stress conditions that induce loss of mitochondrial membrane potential, lead to an impaired equilibrium between L-OPA1 and S-OPA1, thereby inhibiting mitochondrial fusion. Plays a role in the maintenance and remodeling of mitochondrial cristae, some invaginations of the mitochondrial inner membrane that provide an increase in the surface area. Probably acts by forming helical filaments at the inside of inner membrane tubes with the shape and dimensions of crista junctions. The polypeptide is Dynamin-like GTPase OPA1, mitochondrial (Gallus gallus (Chicken)).